Here is a 119-residue protein sequence, read N- to C-terminus: Large ribosomal subunit protein bL20 (119 aa).

This sequence belongs to the bacterial ribosomal protein bL20 family.

Functionally, binds directly to 23S ribosomal RNA and is necessary for the in vitro assembly process of the 50S ribosomal subunit. It is not involved in the protein synthesizing functions of that subunit. In Geobacillus stearothermophilus (Bacillus stearothermophilus), this protein is Large ribosomal subunit protein bL20 (rplT).